We begin with the raw amino-acid sequence, 708 residues long: Capsid scaffolding protein (708 aa).

Residues histidine 63, serine 132, and histidine 157 each act as charge relay system in the active site. Disordered regions lie at residues 269–339 (ASAE…MSHP), 455–565 (HPSY…QQQR), and 593–619 (ALPS…SGGG). The span at 284–293 (PAAGARVPSS) shows a compositional bias: low complexity. The span at 294–311 (SPSPPVEPPSPVQPPALP) shows a compositional bias: pro residues. The segment covering 326-339 (SPSEPAEAASMSHP) has biased composition (low complexity). Positions 333 to 352 (AASMSHPLSAAVPAATAPPG) are interaction with pAP. Basic residues predominate over residues 498 to 513 (KQHRHGGSGGHNKRRK). 2 consecutive short sequence motifs (nuclear localization signal) follow at residues 510-515 (KRRKET) and 537-543 (RARKRLK). Over residues 593-611 (ALPSAASSSPTTTTVCTPT) the composition is skewed to low complexity. The tract at residues 688 to 708 (PPKDMVDLNRRIFVAALNKLE) is interaction with major capsid protein.

It belongs to the herpesviridae capsid scaffolding protein family. In terms of assembly, homomultimer. Interacts with major capsid protein. Exists in a monomer-dimer equilibrium with the dimer being the active species. Capsid scaffolding protein is cleaved by assemblin after formation of the spherical procapsid. As a result, the capsid obtains its mature, icosahedral shape. Cleavages occur at two or more sites: release (R-site) and maturation (M-site).

It localises to the host cytoplasm. The protein resides in the host nucleus. It catalyses the reaction Cleaves -Ala-|-Ser- and -Ala-|-Ala- bonds in the scaffold protein.. Its function is as follows. Acts as a scaffold protein by binding major capsid protein in the cytoplasm, inducing the nuclear localization of both proteins. Multimerizes in the nucleus such as major capsid protein forms the icosahedral T=16 capsid. Autocatalytic cleavage releases the assembly protein, and subsequently abolishes interaction with major capsid protein. Cleavages products are evicted from the capsid before or during DNA packaging. Protease that plays an essential role in virion assembly within the nucleus. Catalyzes the cleavage of the assembly protein after formation of the spherical procapsid. By that cleavage, the capsid matures and gains its icosahedral shape. The cleavage sites seem to include -Ala-Ser-, -Ala-Ala-, as well as Ala-Thr bonds. Assemblin and cleavages products are evicted from the capsid before or during DNA packaging. In terms of biological role, plays a major role in capsid assembly. Acts as a scaffold protein by binding major capsid protein. Multimerizes in the nucleus such as major capsid protein forms the icosahedral T=16 capsid. Cleaved by assemblin after capsid completion. The cleavages products are evicted from the capsid before or during DNA packaging. The sequence is that of Capsid scaffolding protein (UL80) from Homo sapiens (Human).